The sequence spans 218 residues: Thiopurine S-methyltransferase (218 aa).

4 residues coordinate S-adenosyl-L-methionine: Trp10, Leu45, Glu66, and Arg123.

This sequence belongs to the class I-like SAM-binding methyltransferase superfamily. TPMT family.

Its subcellular location is the cytoplasm. The catalysed reaction is S-adenosyl-L-methionine + a thiopurine = S-adenosyl-L-homocysteine + a thiopurine S-methylether.. The polypeptide is Thiopurine S-methyltransferase (Xanthomonas euvesicatoria pv. vesicatoria (strain 85-10) (Xanthomonas campestris pv. vesicatoria)).